A 390-amino-acid polypeptide reads, in one-letter code: GTPase Obg (390 aa).

The region spanning 1 to 159 (MKFVDEASIL…RELLLELMLL (159 aa)) is the Obg domain. The tract at residues 127-147 (NTRFKSSVNRTPRQKTNGTPG) is disordered. Polar residues predominate over residues 129-145 (RFKSSVNRTPRQKTNGT). The OBG-type G domain maps to 160 to 333 (ADVGMLGMPN…LCWDVMTFII (174 aa)). Residues 166 to 173 (GMPNAGKS), 191 to 195 (FTTLV), 213 to 216 (DIPG), 283 to 286 (NKID), and 314 to 316 (SAA) each bind GTP. Residues Ser173 and Thr193 each coordinate Mg(2+).

This sequence belongs to the TRAFAC class OBG-HflX-like GTPase superfamily. OBG GTPase family. In terms of assembly, monomer. Requires Mg(2+) as cofactor.

The protein localises to the cytoplasm. Its function is as follows. An essential GTPase which binds GTP, GDP and possibly (p)ppGpp with moderate affinity, with high nucleotide exchange rates and a fairly low GTP hydrolysis rate. Plays a role in control of the cell cycle, stress response, ribosome biogenesis and in those bacteria that undergo differentiation, in morphogenesis control. The polypeptide is GTPase Obg (Escherichia fergusonii (strain ATCC 35469 / DSM 13698 / CCUG 18766 / IAM 14443 / JCM 21226 / LMG 7866 / NBRC 102419 / NCTC 12128 / CDC 0568-73)).